We begin with the raw amino-acid sequence, 483 residues long: Probable 4-aminobutyrate aminotransferase, mitochondrial (483 aa).

148 to 149 (GT) contributes to the pyridoxal 5'-phosphate binding site. Arginine 204 lines the substrate pocket. Lysine 341 carries the N6-(pyridoxal phosphate)lysine modification. Pyridoxal 5'-phosphate is bound at residue threonine 365.

The protein belongs to the class-III pyridoxal-phosphate-dependent aminotransferase family. In terms of assembly, homodimer. Pyridoxal 5'-phosphate is required as a cofactor.

Its subcellular location is the mitochondrion matrix. The catalysed reaction is 4-aminobutanoate + 2-oxoglutarate = succinate semialdehyde + L-glutamate. It carries out the reaction (S)-3-amino-2-methylpropanoate + 2-oxoglutarate = 2-methyl-3-oxopropanoate + L-glutamate. The sequence is that of Probable 4-aminobutyrate aminotransferase, mitochondrial (gta-1) from Caenorhabditis elegans.